The sequence spans 420 residues: LFFQKKYFLDKQLNQNAIQIYQDNLTNQNNNIGKKAKLEDEKHAHNKSITSKYKRVPLASISNVQGSRIQPTRAAKEKLKPPQNISDSQLVNDSLKSSNSIQAHNTKNDLHKENLYNESALDTFKESPMVFSPFLSDSSCKKYSSLNGIQDIDSKLHEVFELPEYAQDIHNYLKKSEAKYRPKSNYMRKQTDINSSMRAILIDWLVEVSEEYKLIPQTLYLSVSYIDRFLSHMSVLRGKLQLVGAACMLVAAKFEEIYPPEVAEFVYITDDTYTAKQVLRMEHLILKTLAFDLSVPTCRDFLSRYLFAANAKPESQLKYLAEYLSELTLINCDISVKYAPSMIAASSICVANHMLNSIPWTPTLEFYSGYNIQDLRSCLNEIHLLHLAASTNPQQAIQQKYKSPKFGCVSSLVPLEMPCF.

Residues 64–93 are disordered; sequence VQGSRIQPTRAAKEKLKPPQNISDSQLVND. Residues 83-93 are compositionally biased toward polar residues; the sequence is QNISDSQLVND.

Belongs to the cyclin family. Cyclin AB subfamily.

Its function is as follows. Essential for the control of the cell cycle at the G2/M (mitosis) transition. Interacts with the CDC2 and CDK2 protein kinases to form MPF. G2/M cyclins accumulate steadily during G2 and are abruptly destroyed at mitosis. In Hydra viridissima (Green hydra), this protein is G2/mitotic-specific cyclin-A.